The following is a 462-amino-acid chain: PTS system mannitol-specific cryptic EIICB component (462 aa).

Topologically, residues 1 to 24 are cytoplasmic; the sequence is MENKSARAKVQAFGGFLTAMVIPN. The PTS EIIC type-2 domain maps to 13–344; sequence FGGFLTAMVI…LKMEKTVETE (332 aa). A helical transmembrane segment spans residues 25–46; the sequence is IGAFIAWGFITALFIPTGWLPN. The Periplasmic segment spans residues 47 to 50; it reads EHFA. The chain crosses the membrane as a helical span at residues 51–71; that stretch reads KIVGPMITYLLPVMIGSTGGH. Residues 72–134 lie on the Cytoplasmic side of the membrane; that stretch reads LVGGKRGAVM…AGFEMVINNF (63 aa). Residues 135–156 form a helical membrane-spanning segment; it reads SLGIAGMLLCLLGFEVIGPAVL. Residues 157-165 are Periplasmic-facing; that stretch reads IANTFVKEC. The helical transmembrane segment at 166–186 threads the bilayer; it reads IEALVHAGYLPLLSVINEPAK. The Cytoplasmic segment spans residues 187–273; that stretch reads VLFLNNAIDQ…VLMKPLTIIA (87 aa). A helical membrane pass occupies residues 274-293; that stretch reads MIAGGMSGTWMFNLLDGGLV. Residues 294-313 are Periplasmic-facing; the sequence is AGPSPGSIFAYLALTPKGSF. The chain crosses the membrane as a helical span at residues 314–335; the sequence is LATIAGVTVGTLVSFAITSLIL. At 336-462 the chain is on the cytoplasmic side; that stretch reads KMEKTVETES…FNQLTAEHKH (127 aa). Positions 371-461 constitute a PTS EIIB type-2 domain; that stretch reads KRIAFVCDAG…LFNQLTAEHK (91 aa). Catalysis depends on Cys377, which acts as the Phosphocysteine intermediate; for EIIB activity. Cys377 is modified (phosphocysteine; by EIIA).

The protein localises to the cell inner membrane. It catalyses the reaction D-mannitol(out) + N(pros)-phospho-L-histidyl-[protein] = D-mannitol 1-phosphate(in) + L-histidyl-[protein]. In terms of biological role, the phosphoenolpyruvate-dependent sugar phosphotransferase system (sugar PTS), a major carbohydrate active transport system, catalyzes the phosphorylation of incoming sugar substrates concomitantly with their translocation across the cell membrane. The enzyme II CmtAB PTS system is involved in D-mannitol transport. The chain is PTS system mannitol-specific cryptic EIICB component (cmtA) from Escherichia coli O157:H7.